A 145-amino-acid chain; its full sequence is Protein BUD31 homolog 2 (145 aa).

It belongs to the BUD31 (G10) family.

The protein localises to the nucleus. The sequence is that of Protein BUD31 homolog 2 from Oryza sativa subsp. japonica (Rice).